We begin with the raw amino-acid sequence, 450 residues long: Saccharopine dehydrogenase [NADP(+), L-glutamate-forming] (450 aa).

NADP(+) is bound by residues 11 to 14, 33 to 35, 55 to 56, Ile-76, 98 to 99, 125 to 127, and Ser-175; these read SGFV, CRT, DV, TS, and LDP. L-saccharopine-binding positions include 99 to 100 and Asp-126; that span reads SY. L-saccharopine contacts are provided by residues Arg-224 and 245 to 247; that span reads TLR.

It belongs to the saccharopine dehydrogenase family. In terms of assembly, homodimer.

It carries out the reaction L-saccharopine + NADP(+) + H2O = (S)-2-amino-6-oxohexanoate + L-glutamate + NADPH + H(+). The protein operates within amino-acid biosynthesis; L-lysine biosynthesis via AAA pathway; L-lysine from L-alpha-aminoadipate (fungal route): step 2/3. This Pyricularia oryzae (strain 70-15 / ATCC MYA-4617 / FGSC 8958) (Rice blast fungus) protein is Saccharopine dehydrogenase [NADP(+), L-glutamate-forming] (LYS3).